The following is a 292-amino-acid chain: 4-hydroxy-tetrahydrodipicolinate synthase (292 aa).

Thr45 provides a ligand contact to pyruvate. Residue Tyr133 is the Proton donor/acceptor of the active site. Residue Lys161 is the Schiff-base intermediate with substrate of the active site. Residue Ile203 coordinates pyruvate.

The protein belongs to the DapA family. Homotetramer; dimer of dimers.

The protein localises to the cytoplasm. The catalysed reaction is L-aspartate 4-semialdehyde + pyruvate = (2S,4S)-4-hydroxy-2,3,4,5-tetrahydrodipicolinate + H2O + H(+). The protein operates within amino-acid biosynthesis; L-lysine biosynthesis via DAP pathway; (S)-tetrahydrodipicolinate from L-aspartate: step 3/4. Catalyzes the condensation of (S)-aspartate-beta-semialdehyde [(S)-ASA] and pyruvate to 4-hydroxy-tetrahydrodipicolinate (HTPA). The protein is 4-hydroxy-tetrahydrodipicolinate synthase of Vibrio cholerae serotype O1 (strain ATCC 39541 / Classical Ogawa 395 / O395).